The following is a 271-amino-acid chain: Exosome complex component Rrp42 (271 aa).

The protein belongs to the RNase PH family. Rrp42 subfamily. As to quaternary structure, component of the archaeal exosome complex. Forms a hexameric ring-like arrangement composed of 3 Rrp41-Rrp42 heterodimers. The hexameric ring associates with a trimer of Rrp4 and/or Csl4 subunits.

It is found in the cytoplasm. In terms of biological role, non-catalytic component of the exosome, which is a complex involved in RNA degradation. Contributes to the structuring of the Rrp41 active site. The protein is Exosome complex component Rrp42 of Methanothermobacter thermautotrophicus (strain ATCC 29096 / DSM 1053 / JCM 10044 / NBRC 100330 / Delta H) (Methanobacterium thermoautotrophicum).